The following is an 855-amino-acid chain: Envelope glycoprotein H (855 aa).

An N-terminal signal peptide occupies residues 1–19 (MSQPYLKIAILVAATIVSA). At 20–815 (IPVWTTPVST…ASYSAFKIPS (796 aa)) the chain is on the virion surface side. 7 N-linked (GlcNAc...) asparagine; by host glycosylation sites follow: N42, N48, N52, N68, N126, N189, and N217. Positions 174–195 (PVGVVLSPPRTSPDVNNTIRDD) are disordered. Residues 247–310 (DTTQAIAYLG…YAGPIYKVYV (64 aa)) are interaction with gL. Residues N503, N679, N773, and N796 are each glycosylated (N-linked (GlcNAc...) asparagine; by host). Residues 816-836 (TYLWASIGGLLLAILILYVIV) traverse the membrane as a helical segment. Residues 837–855 (KMLCGGVINNDYSLLLNSE) lie on the Intravirion side of the membrane.

It belongs to the herpesviridae glycoprotein H family. As to quaternary structure, interacts with glycoprotein L (gL); this interaction is necessary for the correct processing and cell surface expression of gH. The heterodimer gH/gL seems to interact with gB trimers during fusion. Post-translationally, N-glycosylated, O-glycosylated, and sialylated.

The protein localises to the virion membrane. It is found in the host cell membrane. Its subcellular location is the host endosome membrane. The heterodimer glycoprotein H-glycoprotein L is required for the fusion of viral and plasma membranes leading to virus entry into the host cell. Following initial binding to host receptor, membrane fusion is mediated by the fusion machinery composed of gB and the heterodimer gH/gL. May also be involved in the fusion between the virion envelope and the outer nuclear membrane during virion morphogenesis. This Equine herpesvirus 4 (strain 1942) (EHV-4) protein is Envelope glycoprotein H.